Reading from the N-terminus, the 162-residue chain is Translocator protein 2 (162 aa).

5 helical membrane-spanning segments follow: residues 3–23, 44–64, 79–99, 103–123, and 129–149; these read LQGP…CMLI, VILL…YLVW, LGLY…FLAA, GLAL…VFIW, and LAAL…AITY.

Belongs to the TspO/BZRP family. Homotetramer. May also form homodimer. As to expression, expressed in liver, bone marrow and spleen. In spleen, detected in red pulp but not in white pulp.

It is found in the endoplasmic reticulum membrane. The protein resides in the cell membrane. Its function is as follows. Cholesterol-binding protein involved in the redistribution of cholesterol from lipid droplets to the endoplasmic reticulum. Required to meet cholesterol demands during erythropoietic differentiation. May play a role in transport processes at the plasma membrane of erythrocytes, including regulating VDAC-mediated ATP export, and import of the heme precursors protoporphyrin IX and 5-aminolevulinic acid. The chain is Translocator protein 2 (Tspo2) from Mus musculus (Mouse).